The primary structure comprises 54 residues: VATVDCSDYPKPACTVEYMPLCGSDNKTYDNKCNFCNAVVDSNGTLTLSHFGKC.

Residues 4–54 enclose the Kazal-like domain; sequence VDCSDYPKPACTVEYMPLCGSDNKTYDNKCNFCNAVVDSNGTLTLSHFGKC. Cystine bridges form between Cys-6–Cys-36, Cys-14–Cys-33, and Cys-22–Cys-54. N-linked (GlcNAc...) asparagine glycosylation is present at Asn-43.

It localises to the secreted. This is Ovomucoid from Anser anser anser (Western greylag goose).